The sequence spans 280 residues: uncharacterized protein (280 aa).

This sequence to E.coli YgfZ (UP14) and B.aphidicola (subsp. Acyrthosiphon pisum) BU435.

This is an uncharacterized protein from Haemophilus influenzae (strain ATCC 51907 / DSM 11121 / KW20 / Rd).